A 303-amino-acid polypeptide reads, in one-letter code: HTH-type transcriptional regulator CatM (303 aa).

The 58-residue stretch at 1–58 folds into the HTH lysR-type domain; sequence MELRHLRYFVTVVEEQSISKAAEKLCIAQPPLSRQIQKLEEELGIQLFERGFRPAKVT. A DNA-binding region (H-T-H motif) is located at residues 18–37; sequence ISKAAEKLCIAQPPLSRQIQ. Serine 99 and threonine 128 together coordinate cis,cis-muconate.

This sequence belongs to the LysR transcriptional regulatory family. As to quaternary structure, homotetramer in solution.

Positively regulates the expression of catA, catBCIJFD and benPK in response to cis,cis-muconate. It binds to the catB-catM intercistronic region, to a specific sequence upstream of catA and to the benPK promoter region. Can also repress pca genes. The chain is HTH-type transcriptional regulator CatM (catM) from Acinetobacter baylyi (strain ATCC 33305 / BD413 / ADP1).